The following is a 155-amino-acid chain: Transcriptional repressor NrdR (155 aa).

The segment at 3 to 34 (CPFCHAEETKVVDSRLVADGAQVRRRRECLEC) is a zinc-finger region. In terms of domain architecture, ATP-cone spans 49–139 (PLIIKRDGRR…VYKRFKDVSD (91 aa)).

Belongs to the NrdR family. Requires Zn(2+) as cofactor.

In terms of biological role, negatively regulates transcription of bacterial ribonucleotide reductase nrd genes and operons by binding to NrdR-boxes. This Legionella pneumophila (strain Paris) protein is Transcriptional repressor NrdR.